Here is a 312-residue protein sequence, read N- to C-terminus: Pyridoxal kinase (312 aa).

Met-1 carries the N-acetylmethionine modification. Residues Ser-12 and Thr-47 each coordinate pyridoxal. Thr-47 is a binding site for pyridoxal 5'-phosphate. Ser-59 is subject to Phosphoserine. Position 113 (Asp-113) interacts with ATP. Na(+) is bound at residue Asp-113. Asp-118 is a binding site for Mg(2+). Position 148 (Thr-148) interacts with Na(+). 150-153 provides a ligand contact to ATP; the sequence is NQFE. The residue at position 164 (Ser-164) is a Phosphoserine. A Na(+)-binding site is contributed by Thr-186. 186–187 is a binding site for ATP; the sequence is TS. Ser-213 is modified (phosphoserine). Residues 226-228 and Thr-233 each bind ATP; that span reads VDA. 234–235 is a binding site for pyridoxal 5'-phosphate; sequence GD. The Proton acceptor role is filled by Asp-235. Residue Ser-285 is modified to Phosphoserine.

It belongs to the pyridoxine kinase family. As to quaternary structure, homodimer. Mg(2+) is required as a cofactor. Requires Zn(2+) as cofactor. The cofactor is Co(2+). Mn(2+) serves as cofactor. In terms of tissue distribution, ubiquitous. Highly expressed in testis. As to expression, in adult testis and spermatozoa.

The protein localises to the cytoplasm. Its subcellular location is the cytosol. It carries out the reaction pyridoxal + ATP = pyridoxal 5'-phosphate + ADP + H(+). The enzyme catalyses pyridoxamine + ATP = pyridoxamine 5'-phosphate + ADP + H(+). It catalyses the reaction pyridoxine + ATP = pyridoxine 5'-phosphate + ADP + H(+). It participates in cofactor metabolism; pyridoxal 5'-phosphate salvage; pyridoxal 5'-phosphate from pyridoxal: step 1/1. It functions in the pathway cofactor metabolism; pyridoxal 5'-phosphate salvage; pyridoxine 5'-phosphate from pyridoxine: step 1/1. The protein operates within cofactor metabolism; pyridoxal 5'-phosphate salvage; pyridoxamine 5'-phosphate from pyridoxamine: step 1/1. With respect to regulation, catalytic activity is inhibited competitively by 4-deoxypyridoxine, and is also inhibited by the benzodiazepine receptor ligands 1012S and ethyl-beta-carboline-3-carboxylate. Inhibited by ginkgotoxin, theophylline, lamotrigine, enprofylline, theobromine, and caffeine. Activity is increased in the presence of K(+)or Na(+). Its function is as follows. Catalyzes the phosphorylation of the dietary vitamin B6 vitamers pyridoxal (PL), pyridoxine (PN) and pyridoxamine (PM) to form pyridoxal 5'-phosphate (PLP), pyridoxine 5'-phosphate (PNP) and pyridoxamine 5'-phosphate (PMP), respectively. PLP is the active form of vitamin B6, and acts as a cofactor for over 140 different enzymatic reactions. The chain is Pyridoxal kinase from Homo sapiens (Human).